The primary structure comprises 366 residues: tRNA 2-selenouridine synthase (366 aa).

The Rhodanese domain occupies 12-135 (FLNDVPMMDA…MRTFLLDTLH (124 aa)). Residue Cys-95 is the S-selanylcysteine intermediate of the active site.

Belongs to the SelU family. In terms of assembly, monomer.

The enzyme catalyses 5-methylaminomethyl-2-thiouridine(34) in tRNA + selenophosphate + (2E)-geranyl diphosphate + H2O + H(+) = 5-methylaminomethyl-2-selenouridine(34) in tRNA + (2E)-thiogeraniol + phosphate + diphosphate. It catalyses the reaction 5-methylaminomethyl-2-thiouridine(34) in tRNA + (2E)-geranyl diphosphate = 5-methylaminomethyl-S-(2E)-geranyl-thiouridine(34) in tRNA + diphosphate. The catalysed reaction is 5-methylaminomethyl-S-(2E)-geranyl-thiouridine(34) in tRNA + selenophosphate + H(+) = 5-methylaminomethyl-2-(Se-phospho)selenouridine(34) in tRNA + (2E)-thiogeraniol. It carries out the reaction 5-methylaminomethyl-2-(Se-phospho)selenouridine(34) in tRNA + H2O = 5-methylaminomethyl-2-selenouridine(34) in tRNA + phosphate. In terms of biological role, involved in the post-transcriptional modification of the uridine at the wobble position (U34) of tRNA(Lys), tRNA(Glu) and tRNA(Gln). Catalyzes the conversion of 2-thiouridine (S2U-RNA) to 2-selenouridine (Se2U-RNA). Acts in a two-step process involving geranylation of 2-thiouridine (S2U) to S-geranyl-2-thiouridine (geS2U) and subsequent selenation of the latter derivative to 2-selenouridine (Se2U) in the tRNA chain. The chain is tRNA 2-selenouridine synthase from Pseudomonas syringae pv. tomato (strain ATCC BAA-871 / DC3000).